A 491-amino-acid chain; its full sequence is Nuatigenin 3-beta-glucosyltransferase (491 aa).

The active-site Proton acceptor is the His-20. Residue His-20 coordinates an anthocyanidin. The Charge relay role is filled by Asp-125. The UDP-alpha-D-glucose site is built by Ala-352, Gln-354, His-369, Trp-372, Asn-373, Ser-374, and Glu-377. Ala-392 lines the an anthocyanidin pocket. UDP-alpha-D-glucose is bound by residues Glu-393 and Gln-394.

The protein belongs to the UDP-glycosyltransferase family. In terms of tissue distribution, expressed in roots, stems and leaves.

It carries out the reaction nuatigenin + UDP-alpha-D-glucose = nuatigenin 3-beta-D-glucopyranoside + UDP + H(+). The catalysed reaction is diosgenin + UDP-alpha-D-glucose = diosgenin 3-O-beta-D-glucoside + UDP + H(+). The enzyme catalyses tigogenin + UDP-alpha-D-glucose = tigogenin 3-O-beta-D-glucopyranoside + UDP + H(+). It catalyses the reaction solasodine + UDP-alpha-D-glucose = solasodine 3-beta-D-glucoside + UDP + H(+). It carries out the reaction solanidine + UDP-alpha-D-glucose = solanidine 3-O-beta-D-glucopyranoside + UDP + H(+). The catalysed reaction is tomatidine + UDP-alpha-D-glucose = tomatidine 3-O-beta-D-glucopyranoside + UDP + H(+). Its function is as follows. Glucosyltransferase involved in steroid saponin biosynthesis. Catalyzes the 3-O-glucosylation of steroidal sapogenins, such as diosgenin, nuatigenin and tigogenin. Can glucosylate steroidal alkaloids, such as solanidine, solasodine and tomatidine. The polypeptide is Nuatigenin 3-beta-glucosyltransferase (Solanum aculeatissimum (Dutch eggplant)).